Consider the following 156-residue polypeptide: Interleukin-36 receptor antagonist protein (156 aa).

The cysteines at positions 9 and 155 are disulfide-linked.

The protein belongs to the IL-1 family. In terms of assembly, interacts with cargo receptor TMED10; the interaction mediates the translocation from the cytoplasm into the ERGIC (endoplasmic reticulum-Golgi intermediate compartment) and thereby secretion. Post-translationally, removal of N-terminal methionine is necessary for full antagonistic activity. Highly abundant in embryonic tissue and tissues containing epithelial cells.

It localises to the cytoplasm. The protein localises to the secreted. Its function is as follows. Inhibits the activity of interleukin-36 (IL36A,IL36B and IL36G) by binding to receptor IL1RL2/IL-36R and preventing its association with the coreceptor IL1RAP for signaling. Part of the IL-36 signaling system that is thought to be present in epithelial barriers and to take part in local inflammatory response; similar to the IL-1 system with which it shares the coreceptor. Proposed to play a role in skin inflammation. May be involved in the innate immune response to fungal pathogens. May activate an anti-inflammatory signaling pathway by recruiting SIGIRR. In Mus musculus (Mouse), this protein is Interleukin-36 receptor antagonist protein.